Reading from the N-terminus, the 150-residue chain is Arginine repressor (150 aa).

Belongs to the ArgR family.

The protein localises to the cytoplasm. Its pathway is amino-acid biosynthesis; L-arginine biosynthesis [regulation]. In terms of biological role, regulates arginine biosynthesis genes. This Desulforudis audaxviator (strain MP104C) protein is Arginine repressor.